Consider the following 135-residue polypeptide: Large ribosomal subunit protein uL16c (135 aa).

N-methylmethionine is present on M1.

In terms of assembly, component of the chloroplast large ribosomal subunit (LSU). Mature 70S chloroplast ribosomes of higher plants consist of a small (30S) and a large (50S) subunit. The 30S small subunit contains 1 molecule of ribosomal RNA (16S rRNA) and 24 different proteins. The 50S large subunit contains 3 rRNA molecules (23S, 5S and 4.5S rRNA) and 33 different proteins. Post-translationally, partially alpha-N-monomethylated at Met-1 (10%), whereas 90% of it is blocked to Edman degradation, probably by trimethylation.

It localises to the plastid. The protein localises to the chloroplast. Functionally, component of the chloroplast ribosome (chloro-ribosome), a dedicated translation machinery responsible for the synthesis of chloroplast genome-encoded proteins, including proteins of the transcription and translation machinery and components of the photosynthetic apparatus. The sequence is that of Large ribosomal subunit protein uL16c from Spinacia oleracea (Spinach).